An 84-amino-acid polypeptide reads, in one-letter code: MSGNTGERSFADIITSIRYWVIHSITIPSLFIAGWLFVSTGLAYDVFGSPRPNEYFTENQQGIPLITGRFEPLEEQNEFSRRSQ.

Residues 21 to 35 form a helical membrane-spanning segment; that stretch reads VIHSITIPSLFIAGW. His-23 provides a ligand contact to heme.

This sequence belongs to the PsbE/PsbF family. Heterodimer of an alpha subunit and a beta subunit. PSII is composed of 1 copy each of membrane proteins PsbA, PsbB, PsbC, PsbD, PsbE, PsbF, PsbH, PsbI, PsbJ, PsbK, PsbL, PsbM, PsbT, PsbX, PsbY, PsbZ, Psb30/Ycf12, at least 3 peripheral proteins of the oxygen-evolving complex and a large number of cofactors. It forms dimeric complexes. Heme b is required as a cofactor.

Its subcellular location is the plastid membrane. Functionally, this b-type cytochrome is tightly associated with the reaction center of photosystem II (PSII). PSII is a light-driven water:plastoquinone oxidoreductase that uses light energy to abstract electrons from H(2)O, generating O(2) and a proton gradient subsequently used for ATP formation. It consists of a core antenna complex that captures photons, and an electron transfer chain that converts photonic excitation into a charge separation. The protein is Cytochrome b559 subunit alpha of Cuscuta gronovii (Common dodder).